The sequence spans 89 residues: Small ribosomal subunit protein uS15 (89 aa).

This sequence belongs to the universal ribosomal protein uS15 family. As to quaternary structure, part of the 30S ribosomal subunit. Forms a bridge to the 50S subunit in the 70S ribosome, contacting the 23S rRNA.

One of the primary rRNA binding proteins, it binds directly to 16S rRNA where it helps nucleate assembly of the platform of the 30S subunit by binding and bridging several RNA helices of the 16S rRNA. In terms of biological role, forms an intersubunit bridge (bridge B4) with the 23S rRNA of the 50S subunit in the ribosome. The sequence is that of Small ribosomal subunit protein uS15 from Pelotomaculum thermopropionicum (strain DSM 13744 / JCM 10971 / SI).